The chain runs to 157 residues: 3-hydroxyacyl-[acyl-carrier-protein] dehydratase FabZ (157 aa).

Residue His58 is part of the active site.

Belongs to the thioester dehydratase family. FabZ subfamily.

Its subcellular location is the cytoplasm. It carries out the reaction a (3R)-hydroxyacyl-[ACP] = a (2E)-enoyl-[ACP] + H2O. Involved in unsaturated fatty acids biosynthesis. Catalyzes the dehydration of short chain beta-hydroxyacyl-ACPs and long chain saturated and unsaturated beta-hydroxyacyl-ACPs. This is 3-hydroxyacyl-[acyl-carrier-protein] dehydratase FabZ from Brucella melitensis biotype 2 (strain ATCC 23457).